A 125-amino-acid chain; its full sequence is Casein kinase I isoform alpha (125 aa).

Residues 1–125 form the Protein kinase domain; that stretch reads GEEVAVKLES…LIDFGLAKKY (125 aa). Residue lysine 7 coordinates ATP. Aspartate 97 (proton acceptor) is an active-site residue.

This sequence belongs to the protein kinase superfamily. CK1 Ser/Thr protein kinase family. Casein kinase I subfamily. In terms of assembly, interacts with the Axin complex. Interacts with TUT1, leading to TUT1 phosphorylation. Interacts with FAM83A, FAM83B, FAM83C, FAM83D, FAM83E, FAM83F, FAM83G and FAM83H (via DUF1669). Interaction with FAM83H recruits CSNK1A1 to keratin filaments. Post-translationally, phosphorylated by MTOR in response to mitogenic stimulation, leading to its activation.

Its subcellular location is the cytoplasm. The protein localises to the cytoskeleton. It localises to the microtubule organizing center. The protein resides in the centrosome. It is found in the chromosome. Its subcellular location is the centromere. The protein localises to the kinetochore. It localises to the nucleus speckle. The protein resides in the cilium basal body. It is found in the spindle. The catalysed reaction is L-seryl-[protein] + ATP = O-phospho-L-seryl-[protein] + ADP + H(+). It catalyses the reaction L-threonyl-[protein] + ATP = O-phospho-L-threonyl-[protein] + ADP + H(+). Functionally, casein kinases are operationally defined by their preferential utilization of acidic proteins such as caseins as substrates. It can phosphorylate a large number of proteins. Participates in Wnt signaling. Phosphorylates CTNNB1 at 'Ser-45'. May phosphorylate PER1 and PER2. May play a role in segregating chromosomes during mitosis. May play a role in keratin cytoskeleton disassembly and thereby, it may regulate epithelial cell migration. Acts as a positive regulator of mTORC1 and mTORC2 signaling in response to nutrients by mediating phosphorylation of DEPTOR inhibitor. Acts as an inhibitor of NLRP3 inflammasome assembly by mediating phosphorylation of NLRP3. This is Casein kinase I isoform alpha (CSNK1A1) from Sus scrofa (Pig).